An 88-amino-acid chain; its full sequence is Large ribosomal subunit protein bL27 (88 aa).

Residues 1 to 21 (MAHKKGQGSTQNNRDSAGRRL) form a disordered region.

This sequence belongs to the bacterial ribosomal protein bL27 family.

This is Large ribosomal subunit protein bL27 from Helicobacter acinonychis (strain Sheeba).